A 149-amino-acid chain; its full sequence is Protein AE7-like 2 (149 aa).

It belongs to the MIP18 family.

May play a role in chromosome segregation through establishment of sister chromatid cohesion. Unable to complement ae7 mutants, and thus probably not involved in the cytosolic iron-sulfur assembly (CIA) pathway. This is Protein AE7-like 2 from Arabidopsis thaliana (Mouse-ear cress).